We begin with the raw amino-acid sequence, 273 residues long: Shikimate dehydrogenase (NADP(+)) (273 aa).

Shikimate-binding positions include 14–16 (SKS) and Thr-61. The active-site Proton acceptor is Lys-65. Shikimate contacts are provided by Asn-86 and Asp-102. NADP(+)-binding positions include 126-130 (GAGGA), 150-155 (NRTHAK), and Met-213. Tyr-215 serves as a coordination point for shikimate. Gly-237 provides a ligand contact to NADP(+).

This sequence belongs to the shikimate dehydrogenase family. In terms of assembly, homodimer.

It catalyses the reaction shikimate + NADP(+) = 3-dehydroshikimate + NADPH + H(+). It functions in the pathway metabolic intermediate biosynthesis; chorismate biosynthesis; chorismate from D-erythrose 4-phosphate and phosphoenolpyruvate: step 4/7. Its function is as follows. Involved in the biosynthesis of the chorismate, which leads to the biosynthesis of aromatic amino acids. Catalyzes the reversible NADPH linked reduction of 3-dehydroshikimate (DHSA) to yield shikimate (SA). The chain is Shikimate dehydrogenase (NADP(+)) from Aeromonas salmonicida (strain A449).